The chain runs to 213 residues: MRNNNVPIAVEGLPFVAGAALISAIFIIIGWKVGAAFFIVVTVFIIFFFRNPKRVTPANEKAVVSPADGVVIYLGPAREPHLDQDMMKISIFMSVFNVHINRVPISARVVDQFYRPGKFLDVRHESATFENEQKGLVLETANGIRLVVVQVAGLIARRIVCYPTIGTMLRRGERYGLIRFGSRLDVYLPLDTELQVTMGDQTVAGETILGVTT.

The Schiff-base intermediate with substrate; via pyruvic acid role is filled by Ser-182. Ser-182 carries the post-translational modification Pyruvic acid (Ser); by autocatalysis.

This sequence belongs to the phosphatidylserine decarboxylase family. PSD-A subfamily. In terms of assembly, heterodimer of a large membrane-associated beta subunit and a small pyruvoyl-containing alpha subunit. Pyruvate is required as a cofactor. In terms of processing, is synthesized initially as an inactive proenzyme. Formation of the active enzyme involves a self-maturation process in which the active site pyruvoyl group is generated from an internal serine residue via an autocatalytic post-translational modification. Two non-identical subunits are generated from the proenzyme in this reaction, and the pyruvate is formed at the N-terminus of the alpha chain, which is derived from the carboxyl end of the proenzyme. The post-translation cleavage follows an unusual pathway, termed non-hydrolytic serinolysis, in which the side chain hydroxyl group of the serine supplies its oxygen atom to form the C-terminus of the beta chain, while the remainder of the serine residue undergoes an oxidative deamination to produce ammonia and the pyruvoyl prosthetic group on the alpha chain.

It is found in the cell membrane. The enzyme catalyses a 1,2-diacyl-sn-glycero-3-phospho-L-serine + H(+) = a 1,2-diacyl-sn-glycero-3-phosphoethanolamine + CO2. It functions in the pathway phospholipid metabolism; phosphatidylethanolamine biosynthesis; phosphatidylethanolamine from CDP-diacylglycerol: step 2/2. Its function is as follows. Catalyzes the formation of phosphatidylethanolamine (PtdEtn) from phosphatidylserine (PtdSer). In Geotalea daltonii (strain DSM 22248 / JCM 15807 / FRC-32) (Geobacter daltonii), this protein is Phosphatidylserine decarboxylase proenzyme.